The chain runs to 257 residues: Pyrroline-5-carboxylate reductase (257 aa).

This sequence belongs to the pyrroline-5-carboxylate reductase family.

The protein localises to the cytoplasm. It carries out the reaction L-proline + NADP(+) = (S)-1-pyrroline-5-carboxylate + NADPH + 2 H(+). The catalysed reaction is L-proline + NAD(+) = (S)-1-pyrroline-5-carboxylate + NADH + 2 H(+). Its pathway is amino-acid biosynthesis; L-proline biosynthesis; L-proline from L-glutamate 5-semialdehyde: step 1/1. Its function is as follows. Catalyzes the reduction of 1-pyrroline-5-carboxylate (PCA) to L-proline. This is Pyrroline-5-carboxylate reductase from Helicobacter pylori (strain ATCC 700392 / 26695) (Campylobacter pylori).